The primary structure comprises 136 residues: Protein NrdI (136 aa).

It belongs to the NrdI family.

In terms of biological role, probably involved in ribonucleotide reductase function. The polypeptide is Protein NrdI (Salmonella typhi).